The sequence spans 127 residues: Holo-[acyl-carrier-protein] synthase (127 aa).

2 residues coordinate Mg(2+): Asp9 and Glu58.

This sequence belongs to the P-Pant transferase superfamily. AcpS family. It depends on Mg(2+) as a cofactor.

The protein resides in the cytoplasm. The catalysed reaction is apo-[ACP] + CoA = holo-[ACP] + adenosine 3',5'-bisphosphate + H(+). Its function is as follows. Transfers the 4'-phosphopantetheine moiety from coenzyme A to a Ser of acyl-carrier-protein. The protein is Holo-[acyl-carrier-protein] synthase of Shewanella oneidensis (strain ATCC 700550 / JCM 31522 / CIP 106686 / LMG 19005 / NCIMB 14063 / MR-1).